Consider the following 401-residue polypeptide: Phosphoglycerate kinase (401 aa).

Residues 20–22 (DFN), Arg-35, 58–61 (HLGR), Arg-117, and Arg-154 contribute to the substrate site. ATP contacts are provided by residues Lys-204, Gly-298, Glu-329, and 358–361 (GGDS).

It belongs to the phosphoglycerate kinase family. Monomer.

It localises to the cytoplasm. The enzyme catalyses (2R)-3-phosphoglycerate + ATP = (2R)-3-phospho-glyceroyl phosphate + ADP. It participates in carbohydrate degradation; glycolysis; pyruvate from D-glyceraldehyde 3-phosphate: step 2/5. The sequence is that of Phosphoglycerate kinase from Bifidobacterium adolescentis (strain ATCC 15703 / DSM 20083 / NCTC 11814 / E194a).